The following is a 60-amino-acid chain: Mastoparan-V (60 aa).

Positions 1–27 are cleaved as a signal peptide; it reads MKNTILILFTAFIALLGFFGMSAEALA. AXPX repeat units follow at residues 27-30, 31-34, 35-38, and 41-44; these read ADPV, ADPL, AGPN, and ADPE. A propeptide spanning residues 28 to 45 is cleaved from the precursor; sequence DPVADPLAGPNAEADPEA. Leucine amide is present on L59.

The protein belongs to the MCD family. Mastoparan subfamily. Expressed by the venom gland.

The protein resides in the secreted. It localises to the target cell membrane. Functionally, antimicrobial and mast cell degranulating peptide. Has broad spectrum antibacterial activity against both Gram-positive and Gram-negative bacteria (S.aureus MIC=32-64 ug/ml, S.xylosus MIC=3 ug/ml, S.alactolyticus MIC=16 ug/ml, C.koseri MIC=4 ug/ml, E.coli MIC=8 ug/ml, K.pneumoniae MIC=64 ug/ml, P.aerugiosa MIC=256 ug/ml, S.choleraesuis MIC=32 ug/ml, S.typhimurium MIC=32 ug/ml, V.parahamelytics MIC=32 ug/ml). Affects membrane permeability of E.coli. Shows hemolytic activities on sheep, chicken and human erythrocytes. Its mast cell degranulation activity may be related to the activation of G-protein coupled receptors in mast cells as well as interaction with other proteins located in cell endosomal membranes in the mast cells. This is Mastoparan-V from Vespa velutina flavitarsus (Asian hornet).